Consider the following 335-residue polypeptide: NAC domain-containing protein 87 (335 aa).

Positions Leu21 to Lys172 constitute an NAC domain. A DNA-binding region spans residues Val119 to Thr178.

The protein localises to the nucleus. Binds to the promoter regions of genes involved in chlorophyll catabolic processes, such as NYC1, SGR1, SGR2 and PAO. This chain is NAC domain-containing protein 87, found in Arabidopsis thaliana (Mouse-ear cress).